A 317-amino-acid polypeptide reads, in one-letter code: 4-hydroxy-3-methylbut-2-enyl diphosphate reductase (317 aa).

Position 12 (cysteine 12) interacts with [4Fe-4S] cluster. Positions 41 and 74 each coordinate (2E)-4-hydroxy-3-methylbut-2-enyl diphosphate. The dimethylallyl diphosphate site is built by histidine 41 and histidine 74. Residues histidine 41 and histidine 74 each contribute to the isopentenyl diphosphate site. Residue cysteine 97 coordinates [4Fe-4S] cluster. Histidine 125 is a binding site for (2E)-4-hydroxy-3-methylbut-2-enyl diphosphate. Dimethylallyl diphosphate is bound at residue histidine 125. Residue histidine 125 coordinates isopentenyl diphosphate. Glutamate 127 serves as the catalytic Proton donor. Threonine 168 is a binding site for (2E)-4-hydroxy-3-methylbut-2-enyl diphosphate. Cysteine 198 contacts [4Fe-4S] cluster. Serine 226, serine 227, asparagine 228, and serine 270 together coordinate (2E)-4-hydroxy-3-methylbut-2-enyl diphosphate. Residues serine 226, serine 227, asparagine 228, and serine 270 each coordinate dimethylallyl diphosphate. Residues serine 226, serine 227, asparagine 228, and serine 270 each coordinate isopentenyl diphosphate.

This sequence belongs to the IspH family. In terms of assembly, homodimer. Requires [4Fe-4S] cluster as cofactor.

The enzyme catalyses isopentenyl diphosphate + 2 oxidized [2Fe-2S]-[ferredoxin] + H2O = (2E)-4-hydroxy-3-methylbut-2-enyl diphosphate + 2 reduced [2Fe-2S]-[ferredoxin] + 2 H(+). The catalysed reaction is dimethylallyl diphosphate + 2 oxidized [2Fe-2S]-[ferredoxin] + H2O = (2E)-4-hydroxy-3-methylbut-2-enyl diphosphate + 2 reduced [2Fe-2S]-[ferredoxin] + 2 H(+). It functions in the pathway isoprenoid biosynthesis; dimethylallyl diphosphate biosynthesis; dimethylallyl diphosphate from (2E)-4-hydroxy-3-methylbutenyl diphosphate: step 1/1. Its pathway is isoprenoid biosynthesis; isopentenyl diphosphate biosynthesis via DXP pathway; isopentenyl diphosphate from 1-deoxy-D-xylulose 5-phosphate: step 6/6. Catalyzes the conversion of 1-hydroxy-2-methyl-2-(E)-butenyl 4-diphosphate (HMBPP) into a mixture of isopentenyl diphosphate (IPP) and dimethylallyl diphosphate (DMAPP). Acts in the terminal step of the DOXP/MEP pathway for isoprenoid precursor biosynthesis. In Yersinia enterocolitica serotype O:8 / biotype 1B (strain NCTC 13174 / 8081), this protein is 4-hydroxy-3-methylbut-2-enyl diphosphate reductase.